Consider the following 120-residue polypeptide: NAD(P)H-quinone oxidoreductase subunit 3, chloroplastic (120 aa).

3 helical membrane-spanning segments follow: residues 9 to 29, 64 to 84, and 88 to 108; these read IFWAFLMISSVIPILAFLISG, MFALVFVVFDVETVFLYPWAV, and ILGVYVFIEALIFVLIPVVGS.

Belongs to the complex I subunit 3 family. As to quaternary structure, NDH is composed of at least 16 different subunits, 5 of which are encoded in the nucleus.

The protein resides in the plastid. It localises to the chloroplast thylakoid membrane. It carries out the reaction a plastoquinone + NADH + (n+1) H(+)(in) = a plastoquinol + NAD(+) + n H(+)(out). The catalysed reaction is a plastoquinone + NADPH + (n+1) H(+)(in) = a plastoquinol + NADP(+) + n H(+)(out). Functionally, NDH shuttles electrons from NAD(P)H:plastoquinone, via FMN and iron-sulfur (Fe-S) centers, to quinones in the photosynthetic chain and possibly in a chloroplast respiratory chain. The immediate electron acceptor for the enzyme in this species is believed to be plastoquinone. Couples the redox reaction to proton translocation, and thus conserves the redox energy in a proton gradient. This is NAD(P)H-quinone oxidoreductase subunit 3, chloroplastic from Nymphaea alba (White water-lily).